We begin with the raw amino-acid sequence, 378 residues long: Erythronate-4-phosphate dehydrogenase (378 aa).

Substrate is bound by residues Ser-45 and Thr-66. Positions 146 and 175 each coordinate NAD(+). Residue Arg-208 is part of the active site. Asp-232 serves as a coordination point for NAD(+). Glu-237 is an active-site residue. His-254 functions as the Proton donor in the catalytic mechanism. Gly-257 serves as a coordination point for NAD(+). Residue Tyr-258 participates in substrate binding.

Belongs to the D-isomer specific 2-hydroxyacid dehydrogenase family. PdxB subfamily. Homodimer.

It is found in the cytoplasm. It catalyses the reaction 4-phospho-D-erythronate + NAD(+) = (R)-3-hydroxy-2-oxo-4-phosphooxybutanoate + NADH + H(+). It participates in cofactor biosynthesis; pyridoxine 5'-phosphate biosynthesis; pyridoxine 5'-phosphate from D-erythrose 4-phosphate: step 2/5. Functionally, catalyzes the oxidation of erythronate-4-phosphate to 3-hydroxy-2-oxo-4-phosphonooxybutanoate. This chain is Erythronate-4-phosphate dehydrogenase, found in Escherichia coli O6:H1 (strain CFT073 / ATCC 700928 / UPEC).